We begin with the raw amino-acid sequence, 349 residues long: Dihydroorotate dehydrogenase (quinone) (349 aa).

FMN contacts are provided by residues 67–71 (AGLDK) and Thr91. Lys71 serves as a coordination point for substrate. A substrate-binding site is contributed by 116–120 (NRLGF). Residues Asn147 and Asn180 each coordinate FMN. Residue Asn180 participates in substrate binding. Ser183 acts as the Nucleophile in catalysis. Position 185 (Asn185) interacts with substrate. Positions 225 and 253 each coordinate FMN. A substrate-binding site is contributed by 254–255 (NT). Residues Gly276, Gly305, and 326–327 (YT) contribute to the FMN site.

It belongs to the dihydroorotate dehydrogenase family. Type 2 subfamily. In terms of assembly, monomer. FMN serves as cofactor.

It is found in the cell membrane. It carries out the reaction (S)-dihydroorotate + a quinone = orotate + a quinol. It functions in the pathway pyrimidine metabolism; UMP biosynthesis via de novo pathway; orotate from (S)-dihydroorotate (quinone route): step 1/1. Catalyzes the conversion of dihydroorotate to orotate with quinone as electron acceptor. The polypeptide is Dihydroorotate dehydrogenase (quinone) (Bordetella parapertussis (strain 12822 / ATCC BAA-587 / NCTC 13253)).